A 142-amino-acid polypeptide reads, in one-letter code: 2-aminomuconate deaminase (142 aa).

The protein belongs to the 2-aminomuconate deaminase family. As to quaternary structure, homotetramer.

The enzyme catalyses (2Z,4E)-2-aminomuconate + H2O = (3E)-2-oxohex-3-enedioate + NH4(+). Slightly inhibited by Pb(2+), Hg(+) and Cu(2+). In terms of biological role, involved in the modified meta-cleavage pathway for the 2-aminophenol catabolism. Only active toward 2-aminomuconic acid. The protein is 2-aminomuconate deaminase (amnD) of Pseudomonas sp.